The following is a 578-amino-acid chain: Probable arginine--tRNA ligase, mitochondrial (578 aa).

Residues 1-16 constitute a mitochondrion transit peptide; the sequence is MACGFRRAIACQLSRV. L-arginine is bound by residues 133–135, histidine 144, tyrosine 322, aspartate 326, and glutamine 350; that span reads SPN. The 'HIGH' region signature appears at 133–144; that stretch reads SPNVAKKFHVGH. N6-acetyllysine is present on lysine 568.

The protein belongs to the class-I aminoacyl-tRNA synthetase family.

The protein resides in the mitochondrion membrane. It carries out the reaction tRNA(Arg) + L-arginine + ATP = L-arginyl-tRNA(Arg) + AMP + diphosphate. In terms of biological role, catalyzes the attachment of arginine to tRNA(Arg) in a two-step reaction: arginine is first activated by ATP to form Arg-AMP and then transferred to the acceptor end of tRNA(Arg). The protein is Probable arginine--tRNA ligase, mitochondrial (RARS2) of Pongo abelii (Sumatran orangutan).